Here is a 277-residue protein sequence, read N- to C-terminus: RsbT co-antagonist protein RsbRB (277 aa).

One can recognise an STAS domain in the interval serine 165–histidine 276. Threonine 186 bears the Phosphothreonine mark.

As to quaternary structure, interacts with RsbRA and RsbS in the stressosome. The stressosome probably also contains RsbRC and RsbRD. In terms of processing, phosphorylated by RsbT.

In terms of biological role, one of 4 functionally non-identical RsbR paralogs, it functions in the environmental signaling branch of the general stress response. Functionally, negative regulator of sigma-B activity. Non-phosphorylated RsbS binds to RsbT, preventing its association with RsbU. Requires any one of RsbRA, RsbRB, RsbRC or RsbRD to sequester RsbT. When RsbS and the RsbR paralog(s) are phosphorylated, they release RsbT, which can then bind and activate RsbU. The sequence is that of RsbT co-antagonist protein RsbRB (rsbRB) from Bacillus subtilis (strain 168).